The following is a 131-amino-acid chain: uncharacterized protein (131 aa).

Helical transmembrane passes span 61-81 (LLLL…YLPI) and 102-122 (VCSI…ALRY).

The protein resides in the membrane. This is an uncharacterized protein from Saccharomyces cerevisiae (strain ATCC 204508 / S288c) (Baker's yeast).